The primary structure comprises 238 residues: Large ribosomal subunit protein uL2 (238 aa).

Residues 203–223 (GGGAWKHPGKPTTVSRNAPPG) are disordered.

Belongs to the universal ribosomal protein uL2 family. As to quaternary structure, part of the 50S ribosomal subunit. Forms a bridge to the 30S subunit in the 70S ribosome.

Its function is as follows. One of the primary rRNA binding proteins. Required for association of the 30S and 50S subunits to form the 70S ribosome, for tRNA binding and peptide bond formation. It has been suggested to have peptidyltransferase activity; this is somewhat controversial. Makes several contacts with the 16S rRNA in the 70S ribosome. In Methanosarcina barkeri (strain Fusaro / DSM 804), this protein is Large ribosomal subunit protein uL2.